A 329-amino-acid chain; its full sequence is DNA-directed RNA polymerase subunit alpha (329 aa).

The segment at 1-235 (MQGSVTEFLK…EQLDAFVDLR (235 aa)) is alpha N-terminal domain (alpha-NTD). The alpha C-terminal domain (alpha-CTD) stretch occupies residues 249-329 (FDPILLRPVD…NWPPASIAED (81 aa)).

It belongs to the RNA polymerase alpha chain family. In terms of assembly, homodimer. The RNAP catalytic core consists of 2 alpha, 1 beta, 1 beta' and 1 omega subunit. When a sigma factor is associated with the core the holoenzyme is formed, which can initiate transcription.

The enzyme catalyses RNA(n) + a ribonucleoside 5'-triphosphate = RNA(n+1) + diphosphate. Functionally, DNA-dependent RNA polymerase catalyzes the transcription of DNA into RNA using the four ribonucleoside triphosphates as substrates. In Pasteurella multocida (strain Pm70), this protein is DNA-directed RNA polymerase subunit alpha.